Here is a 63-residue protein sequence, read N- to C-terminus: Cecropin-C (63 aa).

Positions 1 to 23 are cleaved as a signal peptide; the sequence is MNFYKIFVFVALILAISIGQSEA. Arg62 carries the post-translational modification Arginine amide.

It belongs to the cecropin family.

It localises to the secreted. Functionally, cecropins have lytic and antibacterial activity against several Gram-positive and Gram-negative bacteria. The sequence is that of Cecropin-C (CecC) from Drosophila mauritiana (Fruit fly).